The primary structure comprises 137 residues: Crustacean hyperglycemic hormones (137 aa).

A signal peptide spans 1 to 28 (MVSFRTMWSLVVVVVVVAASLGSSGVHG). Q64 bears the Pyrrolidone carboxylic acid mark. A D-phenylalanine; in form CHH-II modification is found at F66. Intrachain disulfides connect C70-C106, C86-C102, and C89-C115. V135 is subject to Valine amide.

It belongs to the arthropod CHH/MIH/GIH/VIH hormone family. Produced by the medulla terminalis X-organ in the eyestalks and transported to the sinus gland where they are stored and released.

It is found in the secreted. In terms of biological role, hormone found in the sinus gland of isopods and decapods which controls the blood sugar level. Has a secretagogue action over the amylase released from the midgut gland. May act as a stress hormone and may be involved in the control of molting and reproduction. This Procambarus clarkii (Red swamp crayfish) protein is Crustacean hyperglycemic hormones.